The sequence spans 126 residues: Holo-[acyl-carrier-protein] synthase (126 aa).

The Mg(2+) site is built by aspartate 9 and glutamate 58.

The protein belongs to the P-Pant transferase superfamily. AcpS family. Mg(2+) serves as cofactor.

It is found in the cytoplasm. The enzyme catalyses apo-[ACP] + CoA = holo-[ACP] + adenosine 3',5'-bisphosphate + H(+). Transfers the 4'-phosphopantetheine moiety from coenzyme A to a Ser of acyl-carrier-protein. The sequence is that of Holo-[acyl-carrier-protein] synthase from Salmonella newport (strain SL254).